The sequence spans 362 residues: Type-2 angiotensin II receptor (362 aa).

Residues 1 to 44 (MKANFSLATISKNITSSLHVGFVNISSNESTFNCSHKPSDKHLD) are Extracellular-facing. N4, N13, N24, N28, and N33 each carry an N-linked (GlcNAc...) asparagine glycan. Intrachain disulfides connect C34/C289 and C116/C194. Residues 45-69 (AIPVLYYIIFGVGFLVNTIVVTLFC) traverse the membrane as a helical segment. The Cytoplasmic portion of the chain corresponds to 70-79 (CQKGPKKVSS). A helical membrane pass occupies residues 80–103 (IYIFNLAVADLLLLATLPLWATYY). Angiotensin II contacts are provided by Y102 and Y103. The Extracellular portion of the chain corresponds to 104-113 (SHRYDWIFGP). A helical membrane pass occupies residues 114–139 (VMCKVFGSFLTLNMFASIFFITCMSV). Residues 140-158 (DRYQSVIYPFLSQRRNPWQ) lie on the Cytoplasmic side of the membrane. The chain crosses the membrane as a helical span at residues 159–180 (ASYIVPLVWCMACLSSLPTFYF). The angiotensin II site is built by R181, Y203, and K214. The Extracellular portion of the chain corresponds to 181–205 (RDVRTIEYLGVNACIMAFPPEKYAQ). The chain crosses the membrane as a helical span at residues 206 to 231 (WSAGIALMKNILGFIIPLIFIATCYF). Over 232–256 (GIRKHLLKTNSYGKNRITRDQVLKM) the chain is Cytoplasmic. Residues 257–280 (AAAVVLAFIICWLPFHVLTFLDAL) traverse the membrane as a helical segment. Residue D278 coordinates angiotensin II. Residues 281-293 (AWMGVINSCEVIA) lie on the Extracellular side of the membrane. Residues 294–319 (VIDLALPFAILLGFTNSCINPFLYCF) form a helical membrane-spanning segment. D296 provides a ligand contact to angiotensin II. The Cytoplasmic portion of the chain corresponds to 320–362 (VGNRFQQKLRRVFRVPITWLQGKRENGSCGKSSSFREMETFVS). Residues 323 to 332 (RFQQKLRRVF) are helix VIII.

Belongs to the G-protein coupled receptor 1 family. Interacts with MTUS1.

The protein resides in the cell membrane. In terms of biological role, receptor for angiotensin II, a vasoconstricting peptide. Signals primarily via a non-canonical G-protein- and beta-arrestin independent pathways. Cooperates with MTUS1 to inhibit ERK2 activation and cell proliferation. The sequence is that of Type-2 angiotensin II receptor (AGTR2) from Ovis aries (Sheep).